Consider the following 457-residue polypeptide: UDP-N-acetylmuramoyl-tripeptide--D-alanyl-D-alanine ligase (457 aa).

113–119 (GSNGKTT) provides a ligand contact to ATP.

The protein belongs to the MurCDEF family. MurF subfamily.

The protein resides in the cytoplasm. The catalysed reaction is D-alanyl-D-alanine + UDP-N-acetyl-alpha-D-muramoyl-L-alanyl-gamma-D-glutamyl-meso-2,6-diaminopimelate + ATP = UDP-N-acetyl-alpha-D-muramoyl-L-alanyl-gamma-D-glutamyl-meso-2,6-diaminopimeloyl-D-alanyl-D-alanine + ADP + phosphate + H(+). The protein operates within cell wall biogenesis; peptidoglycan biosynthesis. In terms of biological role, involved in cell wall formation. Catalyzes the final step in the synthesis of UDP-N-acetylmuramoyl-pentapeptide, the precursor of murein. This Bacillus subtilis (strain 168) protein is UDP-N-acetylmuramoyl-tripeptide--D-alanyl-D-alanine ligase.